An 845-amino-acid chain; its full sequence is Prickle-like protein 2 (845 aa).

The region spanning 18–126 (FDFQRSSTSD…NVRPFPVTMT (109 aa)) is the PET domain. Residue S92 is modified to Phosphoserine. LIM zinc-binding domains lie at 128-193 (AICE…CLKP), 193-253 (PRCA…LYAE), and 253-317 (EYCD…EDPN). Disordered stretches follow at residues 314-346 (EDPN…NKGK) and 483-546 (YSDM…GSME). The span at 318-327 (GSDSSDSAFQ) shows a compositional bias: polar residues. A phosphoserine mark is found at S319, S321, and S322. Phosphothreonine is present on residues T535, T537, and T540. Phosphoserine is present on residues S544 and S547. Positions 558–581 (AEGGAKRQEHLSRFSMPDLSKDSG) are disordered. A phosphoserine mark is found at S608 and S643. The segment at 642–700 (QSFDFDGGIASSKLPGQEGVHIQPMSERTRRRTTSRDDNRRFRPHRSRRSRRSRSDNAL) is disordered. Residues 683-693 (FRPHRSRRSRR) show a composition bias toward basic residues. Phosphoserine is present on S732. The interval 823-845 (STLGGRGQLHSRKRQKSKNCIIS) is disordered. C842 bears the Cysteine methyl ester mark. C842 carries S-farnesyl cysteine lipidation. Residues 843–845 (IIS) constitute a propeptide, removed in mature form.

The protein belongs to the prickle / espinas / testin family. In terms of tissue distribution, expressed in the hippocampus and cerebral cortex.

It localises to the nucleus membrane. The chain is Prickle-like protein 2 (Prickle2) from Mus musculus (Mouse).